Consider the following 268-residue polypeptide: uncharacterized protein (268 aa).

Residues 15-77 (NQALIRGLRL…NAAGSYRLTI (63 aa)) form the HTH iclR-type domain. The segment at residues 37–56 (LAKLAELANLNKSTAHRLLQ) is a DNA-binding region (H-T-H motif). The region spanning 92–265 (IIHVASPYLE…AEQISLELGY (174 aa)) is the IclR-ED domain.

This is an uncharacterized protein from Haemophilus influenzae (strain ATCC 51907 / DSM 11121 / KW20 / Rd).